The chain runs to 488 residues: 3-octaprenyl-4-hydroxybenzoate carboxy-lyase (488 aa).

Asparagine 172 provides a ligand contact to Mn(2+). Prenylated FMN contacts are provided by residues 175-177 (IYR), 189-191 (RWL), and 194-195 (RG). Residue glutamate 238 coordinates Mn(2+). The active-site Proton donor is aspartate 287.

Belongs to the UbiD family. Homohexamer. Requires prenylated FMN as cofactor. It depends on Mn(2+) as a cofactor.

It localises to the cell membrane. The catalysed reaction is a 4-hydroxy-3-(all-trans-polyprenyl)benzoate + H(+) = a 2-(all-trans-polyprenyl)phenol + CO2. It participates in cofactor biosynthesis; ubiquinone biosynthesis. Functionally, catalyzes the decarboxylation of 3-octaprenyl-4-hydroxy benzoate to 2-octaprenylphenol, an intermediate step in ubiquinone biosynthesis. The protein is 3-octaprenyl-4-hydroxybenzoate carboxy-lyase of Alteromonas mediterranea (strain DSM 17117 / CIP 110805 / LMG 28347 / Deep ecotype).